The following is a 1882-amino-acid chain: uncharacterized protein (1882 aa).

The chain crosses the membrane as a helical span at residues 16–36 (FFLLFGIIFVLFSIIFLETSI). 4 disordered regions span residues 103–129 (DFGS…DVND), 220–306 (FPGD…ESET), 492–513 (VALA…VKDP), and 658–698 (QTDE…TKST). Over residues 221 to 239 (PGDKGKGEDKKTTKKKSEI) the composition is skewed to basic and acidic residues. Residues 240–249 (KQASSATTVL) show a composition bias toward polar residues. Composition is skewed to basic and acidic residues over residues 259–275 (TDAK…KDSN), 284–294 (NKDKVWFKSDE), and 500–511 (DKQESSADDGVK). Residues 667–698 (AKTTQGTTDSLTQLADASSSSSSSSTGDTKST) show a composition bias toward low complexity. 4 helical membrane-spanning segments follow: residues 987 to 1007 (ASVV…ILLI), 1037 to 1057 (VFAG…AFLL), 1080 to 1100 (WISF…ISWI), and 1154 to 1174 (LFTY…AGTI). 2 disordered regions span residues 1233 to 1253 (DQIQ…EHPY) and 1572 to 1598 (KDGQ…TSST). Residues 1234 to 1245 (QIQQQQQQQQQQ) show a composition bias toward low complexity. Residues 1583–1594 (TSSGGGSCGGGS) show a composition bias toward gly residues. 4 helical membrane passes run 1759-1779 (FLLG…GISM), 1807-1827 (FFIP…AGLL), 1828-1848 (VGVQ…VFEF), and 1851-1871 (YMVG…YFWI).

The protein belongs to the ABC-4 integral membrane protein family.

It localises to the cell membrane. This is an uncharacterized protein from Mycoplasma pneumoniae (strain ATCC 29342 / M129 / Subtype 1) (Mycoplasmoides pneumoniae).